Reading from the N-terminus, the 614-residue chain is MFYFLGWFVMGIKGVGGSGHSDYPIPSHNGDGESEKNSSDSTSSKVNAKVTSSLQGAPSTNDENSVSPYSVVDVTDLIESGESSRHVIKKSIETEEAAHRESSVEGAGHSSRGIFGRLQAGLGRLARRVGEAVRNTVGSIFPQRAGAEQRTGKARTKYSPSASRGLRLMFTDFWRYRVLHRNPPMDGLFAKLDADEAEDMAAYTKEYVSNLEKRGAADRETIEHCQMVAKNWEKRARDLRDMGAAKKFLRDPFGKSDPKYKGTLPGEYTVGNTMFYDGPGVSKLSEVDTGFWLDMEKLSDAVLSANIQKGLRARFVLNQSIPQLESLEERFRKLESACDEARASLKEAGWIKEGKEPNKAQRAFRRFVEESRNLELSFGSFGESARRLSARVSQGLAAAGEAIRRCFDCRKGKYSLKKDLSSEELNLAEELIRFTDEMGIERDPDGNYNIPWVENWRTGVPVIEGEGAEHIYETMMPVQESFEQVYEVMDMGLEERRDFAVSQQHYQVPPRSSLNYETPRFREYDVPRNSARSYYDVPRVPPQNEVEEMHVTKGMRSSVYACFVAGMRNYIVSQPQEQIPNSEQVEQLFQELINDGDQIIQELMKIWNEELDNQ.

A disordered region spans residues 23–68 (YPIPSHNGDGESEKNSSDSTSSKVNAKVTSSLQGAPSTNDENSVSP). Residues 49-68 (KVTSSLQGAPSTNDENSVSP) show a composition bias toward polar residues.

It to C.trachomatis CT875.

This is an uncharacterized protein from Chlamydia muridarum (strain MoPn / Nigg).